Here is a 278-residue protein sequence, read N- to C-terminus: uncharacterized protein (278 aa).

This is an uncharacterized protein from Methanocaldococcus jannaschii (strain ATCC 43067 / DSM 2661 / JAL-1 / JCM 10045 / NBRC 100440) (Methanococcus jannaschii).